Reading from the N-terminus, the 158-residue chain is NAD(P)H-quinone oxidoreductase subunit J, chloroplastic (158 aa).

It belongs to the complex I 30 kDa subunit family. In terms of assembly, NDH is composed of at least 16 different subunits, 5 of which are encoded in the nucleus.

The protein resides in the plastid. Its subcellular location is the chloroplast thylakoid membrane. It catalyses the reaction a plastoquinone + NADH + (n+1) H(+)(in) = a plastoquinol + NAD(+) + n H(+)(out). The catalysed reaction is a plastoquinone + NADPH + (n+1) H(+)(in) = a plastoquinol + NADP(+) + n H(+)(out). Functionally, NDH shuttles electrons from NAD(P)H:plastoquinone, via FMN and iron-sulfur (Fe-S) centers, to quinones in the photosynthetic chain and possibly in a chloroplast respiratory chain. The immediate electron acceptor for the enzyme in this species is believed to be plastoquinone. Couples the redox reaction to proton translocation, and thus conserves the redox energy in a proton gradient. The protein is NAD(P)H-quinone oxidoreductase subunit J, chloroplastic of Gossypium barbadense (Sea Island cotton).